The primary structure comprises 214 residues: Large ribosomal subunit protein uL3 (214 aa).

The segment covering 130–151 has biased composition (polar residues); that stretch reads FSSNRASHGNSRSHNTPGSIGQ. The interval 130–163 is disordered; the sequence is FSSNRASHGNSRSHNTPGSIGQAQDPGRVFPGKR. Glutamine 153 carries the N5-methylglutamine modification.

Belongs to the universal ribosomal protein uL3 family. In terms of assembly, part of the 50S ribosomal subunit. Forms a cluster with proteins L14 and L19. Post-translationally, methylated by PrmB.

One of the primary rRNA binding proteins, it binds directly near the 3'-end of the 23S rRNA, where it nucleates assembly of the 50S subunit. This Chromobacterium violaceum (strain ATCC 12472 / DSM 30191 / JCM 1249 / CCUG 213 / NBRC 12614 / NCIMB 9131 / NCTC 9757 / MK) protein is Large ribosomal subunit protein uL3.